A 315-amino-acid chain; its full sequence is Olfactory receptor 10H2 (315 aa).

Residues 1–25 (MLGLNHTSMSEFILVGFSAFPHLQL) are Extracellular-facing. An N-linked (GlcNAc...) asparagine glycan is attached at N5. The helical transmembrane segment at 26 to 46 (MLFLLFLLMYLFTLLGNLLIM) threads the bilayer. Residues 47 to 54 (ATVWSERS) lie on the Cytoplasmic side of the membrane. The chain crosses the membrane as a helical span at residues 55-75 (LHTPMYLFLCVLSVSEILYTV). Residues 76–99 (AIIPRMLADLLSTQRSIAFLACAS) lie on the Extracellular side of the membrane. Residues C97 and C189 are joined by a disulfide bond. A helical membrane pass occupies residues 100 to 120 (QMFFSFSFGFTHSFLLTVMGY). At 121–139 (DRYVAICHPLRYNVLMSPR) the chain is on the cytoplasmic side. Residues 140–160 (GCACLVGCSWAGGSVMGMVVT) form a helical membrane-spanning segment. Residues 161-197 (SAIFQLTFCGSHEIQHFLCHVPPLLKLACGNNVPAVA) are Extracellular-facing. Residues 198-218 (LGVGLVCIMALLGCFLLILLS) traverse the membrane as a helical segment. The Cytoplasmic portion of the chain corresponds to 219–238 (YAFIVADILKIPSAEGRNKA). Residues 239–259 (FSTCASHLIVVIVHYGFASVI) form a helical membrane-spanning segment. At 260–272 (YLKPKGPHSQEGD) the chain is on the extracellular side. Residues 273–293 (TLMATTYAVLTPFLSPIIFSL) form a helical membrane-spanning segment. At 294-315 (RNKELKVAMKRTFLSTLYSSGT) the chain is on the cytoplasmic side.

It belongs to the G-protein coupled receptor 1 family.

The protein resides in the cell membrane. Odorant receptor. This is Olfactory receptor 10H2 (OR10H2) from Homo sapiens (Human).